Consider the following 528-residue polypeptide: MGDAPSPEEKLHLITRNLQEVLGEEKLKEILKERELKIYWGTATTGKPHVAYFVPMSKIADFLKAGCEVTILFADLHAYLDNMKAPWELLELRVSYYENVIKAMLESIGVPLEKLKFIKGTDYQLSKEYTLDVYRLSSVVTQHDSKKAGAEVVKQVEHPLLSGLLYPGLQALDEEYLKVDAQFGGIDQRKIFTFAEKYLPALGYSKRVHLMNPMVPGLTGSKMSSSEEESKIDLLDRKEDVKKKLKKAFCEPGNVENNGVLSFIKHVLFPLKSEFVILRDEKWGGNKTYTAYVDLEKDFAAEVVHPGDLKNSVEVALNKLLDPIREKFNTPALKKLASAAYPDPSKQKPMAKGPAKNSEPEEVIPSRLDIRVGKIITVEKHPDADSLYVEKIDVGEAEPRTVVSGLVQFVPKEELQDRLVVVLCNLKPQKMRGVESQGMLLCASIEGINRQVEPLDPPAGSAPGEHVFVKGYEKGQPDEELKPKKKVFEKLQADFKISEECIAQWKQTNFMTKLGSISCKSLKGGNIS.

Met-1 is modified (N-acetylmethionine). Gly-2 is modified (N-acetylglycine; in Tyrosine--tRNA ligase, cytoplasmic, N-terminally processed). Tyr-39 provides a ligand contact to L-tyrosine. Tyr-39 contacts trans-resveratrol. The 'HIGH' region signature appears at 44–52 (TTGKPHVAY). Residues Tyr-166, Gln-170, Asp-173, and Gln-188 each coordinate L-tyrosine. The trans-resveratrol site is built by Gln-170 and Asp-173. Lys-197 carries the N6-acetyllysine modification. Ser-205 is modified (phosphoserine). Lys-206 is subject to N6-acetyllysine. The short motif at 222–226 (KMSSS) is the 'KMSKS' region element. Positions 242–247 (KKKLKK) match the Nuclear localization signal motif. The interval 339-363 (AAYPDPSKQKPMAKGPAKNSEPEEV) is disordered. Residues 364-468 (IPSRLDIRVG…AGSAPGEHVF (105 aa)) form the tRNA-binding domain. Ser-386 carries the phosphoserine modification. N6-acetyllysine occurs at positions 474, 482, and 490.

This sequence belongs to the class-I aminoacyl-tRNA synthetase family. Homodimer. Interacts (when binding to resveratrol) with PARP1; interaction stimulates the poly-ADP-ribosyltransferase activity of PARP1.

It localises to the cytoplasm. The protein resides in the nucleus. It catalyses the reaction tRNA(Tyr) + L-tyrosine + ATP = L-tyrosyl-tRNA(Tyr) + AMP + diphosphate + H(+). Its activity is regulated as follows. Resveratrol strongly inhibits the tyrosine--tRNA ligase activity. In terms of biological role, tyrosine--tRNA ligase that catalyzes the attachment of tyrosine to tRNA(Tyr) in a two-step reaction: tyrosine is first activated by ATP to form Tyr-AMP and then transferred to the acceptor end of tRNA(Tyr). Also acts as a positive regulator of poly-ADP-ribosylation in the nucleus, independently of its tyrosine--tRNA ligase activity. Activity is switched upon resveratrol-binding: resveratrol strongly inhibits the tyrosine--tRNA ligase activity and promotes relocalization to the nucleus, where YARS1 specifically stimulates the poly-ADP-ribosyltransferase activity of PARP1. This Homo sapiens (Human) protein is Tyrosine--tRNA ligase, cytoplasmic.